Reading from the N-terminus, the 727-residue chain is Pollen-specific leucine-rich repeat extensin-like protein 3 (727 aa).

An N-terminal signal peptide occupies residues 1-22; it reads MPHIYKQPLGIFQGFVPTLTDA. An LRR 1 repeat occupies 19–43; sequence LTDAEVSFIAQRQLLTLPENGELPD. Residue N80 is glycosylated (N-linked (GlcNAc...) asparagine). 9 LRR repeats span residues 107-131, 132-154, 156-179, 180-202, 203-226, 228-249, 250-273, 275-296, and 297-321; these read VAVVAGVDLNGADIAGHLPAELGLM, TDVAMFHLNSNRFCGIIPKSFEK, SLMHEFDVSNNRFVGPFPSVVLSW, PAVKFIDVRYNDFEGQVPPELFK, KDLDAIFLNNNRFTSTIPDSLGES, ASVVTFAHNKFSGCIPRSIGNM, KNLNEIIFKDNSLGGCFPSEIGKL, NVNVFDASMNSFTGVLPPSFVG, and LTSMEEFDISGNKLTGFIPENICKL. A glycan (N-linked (GlcNAc...) asparagine) is linked at N326. A disordered region spans residues 381-727; that stretch reads SKDKCAGGSS…SPPPPMFQGY (347 aa). Pro residues-rich tracts occupy residues 397 to 419, 446 to 457, 466 to 479, 492 to 677, and 718 to 727; these read SPSPVPTRPVHKPQPPKESPQPN, SPPPASSPPTSP, VHKPQPPKESPQPN, SPPP…PKMS, and SPPPPMFQGY. The contains the Ser-Pro(4) repeats stretch occupies residues 432 to 727; that stretch reads SPPPPQQPHH…SPPPPMFQGY (296 aa).

In terms of processing, hydroxylated on proline residues in the S-P-P-P-P repeat. O-glycosylated on hydroxyprolines. Expressed in flowers, stamen, pollen, and pollinated carpels.

The protein resides in the secreted. It is found in the cell wall. Functionally, modulates cell morphogenesis by regulating cell wall formation and assembly, and/or growth polarization. The protein is Pollen-specific leucine-rich repeat extensin-like protein 3 (PEX3) of Arabidopsis thaliana (Mouse-ear cress).